The sequence spans 148 residues: Deoxyuridine 5'-triphosphate nucleotidohydrolase (148 aa).

Substrate-binding positions include Arg68–Gly70, Asn81, Thr85–Asp87, and Lys95.

Belongs to the dUTPase family. Mg(2+) is required as a cofactor.

The catalysed reaction is dUTP + H2O = dUMP + diphosphate + H(+). It participates in pyrimidine metabolism; dUMP biosynthesis; dUMP from dCTP (dUTP route): step 2/2. This enzyme is involved in nucleotide metabolism: it produces dUMP, the immediate precursor of thymidine nucleotides and it decreases the intracellular concentration of dUTP so that uracil cannot be incorporated into DNA. This Rickettsia conorii (strain ATCC VR-613 / Malish 7) protein is Deoxyuridine 5'-triphosphate nucleotidohydrolase.